Consider the following 232-residue polypeptide: MKCPRARVDIFKREIKTRELEPTEKNVYHGLTGPISLPPHNPVSIRFQEMVSWRLRSAVIGFFLLVSSTSGSSAASIPSAPTPDATRESPTGEPHRDRALSTETPTPEPSRDGGSTPEVLHVVTGPVRPRDRDPILERLAEILAETHSLHQLLTPGTGPREDEDEVFARALAAAEIAIGSVADRVMWKATLSCMLVVTSLVFAGVALWVIVARHGHFRVIPHERSRDWSPGL.

Over residues 71–84 the composition is skewed to low complexity; that stretch reads GSSAASIPSAPTPD. Positions 71 to 121 are disordered; sequence GSSAASIPSAPTPDATRESPTGEPHRDRALSTETPTPEPSRDGGSTPEVLH. 2 helical membrane passes run 166–182 and 195–211; these read VFAR…GSVA and LVVT…WVIV.

The protein resides in the membrane. This Ictalurid herpesvirus 1 (strain Auburn) (IcHV-1) protein is Putative membrane protein ORF8 (ORF8).